We begin with the raw amino-acid sequence, 268 residues long: Ubiquinone biosynthesis protein COQ4 homolog, mitochondrial (268 aa).

4 residues coordinate Zn(2+): H171, D172, H175, and E187.

Belongs to the COQ4 family. Component of a multi-subunit COQ enzyme complex. Zn(2+) is required as a cofactor.

It localises to the mitochondrion inner membrane. The catalysed reaction is a 4-hydroxy-3-methoxy-5-(all-trans-polyprenyl)benzoate + H(+) = a 2-methoxy-6-(all-trans-polyprenyl)phenol + CO2. It functions in the pathway cofactor biosynthesis; ubiquinone biosynthesis. Functionally, lyase that catalyzes the C1-decarboxylation of 4-hydroxy-3-methoxy-5-(all-trans-polyprenyl)benzoic acid into 2-methoxy-6-(all-trans-polyprenyl)phenol during ubiquinone biosynthesis. This Drosophila yakuba (Fruit fly) protein is Ubiquinone biosynthesis protein COQ4 homolog, mitochondrial.